Consider the following 417-residue polypeptide: Histidine--tRNA ligase (417 aa).

It belongs to the class-II aminoacyl-tRNA synthetase family. As to quaternary structure, homodimer.

It localises to the cytoplasm. The catalysed reaction is tRNA(His) + L-histidine + ATP = L-histidyl-tRNA(His) + AMP + diphosphate + H(+). This chain is Histidine--tRNA ligase, found in Nitratidesulfovibrio vulgaris (strain DP4) (Desulfovibrio vulgaris).